Reading from the N-terminus, the 408-residue chain is Elongation factor Tu (408 aa).

The 210-residue stretch at 10-219 (KTHVNVGTIG…ALDTYIPDPV (210 aa)) folds into the tr-type G domain. Residues 19 to 26 (GHVDHGKT), 88 to 92 (DCPGH), and 143 to 146 (NKCD) contribute to the GTP site. Thr-26 contacts Mg(2+).

The protein belongs to the TRAFAC class translation factor GTPase superfamily. Classic translation factor GTPase family. EF-Tu/EF-1A subfamily. Monomer.

The protein resides in the cytoplasm. The catalysed reaction is GTP + H2O = GDP + phosphate + H(+). Its function is as follows. GTP hydrolase that promotes the GTP-dependent binding of aminoacyl-tRNA to the A-site of ribosomes during protein biosynthesis. The chain is Elongation factor Tu from Brachyspira hyodysenteriae (strain ATCC 49526 / WA1).